The primary structure comprises 66 residues: Large ribosomal subunit protein bL33c (66 aa).

Belongs to the bacterial ribosomal protein bL33 family.

The protein resides in the plastid. Its subcellular location is the chloroplast. This chain is Large ribosomal subunit protein bL33c, found in Barbarea verna (Land cress).